The following is an 86-amino-acid chain: Large ribosomal subunit protein bL31 (86 aa).

The disordered stretch occupies residues 64–86 (KYGMGSANSSESKDQKEEKDSKK). A compositionally biased stretch (basic and acidic residues) spans 74-86 (ESKDQKEEKDSKK).

It belongs to the bacterial ribosomal protein bL31 family. Type A subfamily. In terms of assembly, part of the 50S ribosomal subunit.

Binds the 23S rRNA. This is Large ribosomal subunit protein bL31 from Prochlorococcus marinus (strain MIT 9301).